The following is a 341-amino-acid chain: Cell division protein FtsQ (341 aa).

Topologically, residues 1–126 (MTETDEGAPV…VARGVVRGLK (126 aa)) are cytoplasmic. The chain crosses the membrane as a helical span at residues 127-147 (TLFATVMFSIAGFGLGLALYV). Residues 148-341 (TPAMSVRNIV…VSSPDLPTVK (194 aa)) are Extracellular-facing. Positions 151-219 (MSVRNIVVTG…SALRITIVER (69 aa)) constitute a POTRA domain.

This sequence belongs to the FtsQ/DivIB family. FtsQ subfamily.

The protein localises to the cell membrane. Essential cell division protein. The protein is Cell division protein FtsQ of Mycobacterium leprae (strain Br4923).